A 1105-amino-acid polypeptide reads, in one-letter code: MPVRMYDVSPRVFCAMQNLDITLLASYPEAEIRPVLPSLVRMSLLSPLDNTESSMESRKEILAVLIGIEVVNSIVSYLQVNYHELENELKKELQARQKSAFFEGQQHEYGLQSGIALGFERADVARKVRVVLSEIFNLQQQVSEQKPAAHSEMLDDGIYLEEVVDILCIALAELPSLLNILELTDALVHVPNGHRIICALVANFPDCYRDVVSHVIANCDEDGSDGKHRLMLLMGLSEMNPSQALANRSMCVDMLKVPSFMLKLTLKHPEDLIAFLTGLLLGNDQNLRSWFAAYIRSSQKRKGDALNLVRVELLQKVIQTTTNAAELRDFNLQGAVLLRLYCALRGIGGLKFNDDEINALSQLVTSCPQATPSGVRFVTLALCMLIACPSLVSTIPLENKAVEWLQWLIREDAFFCKRPGTSTSLGEMLLLLAIHFHSNQISAISEMVCSTLAMKIPIRPNSTNRIKQLFTQDLFTEQVVALHAVRVPVTPNLNGTILCYLPVHCIQQLLKSRTFLKHKVPIKSWIFKQICSSVRPVHPVMPALVEVFVNTLIIPNPTGKVNIDHMHRPFTEAEILHVFRTSKLTFFAEELPPMAESQELNQIEVTCPLTAQLLMIYYLMLYEDTRLMNLSALGGRKQKEYSNNFLGGLPLKYLLQKAHHYHNDYLSLFHPLLRLIISNYPHLSMVDDWLEEHNLAQGNSTVVVSKHELKPETLDRALAAIQTKPHLAIRVFKQLLQMPPETQAQYGQQLVKHLPMVFAKSVPRYVKDLYNDIWLRLNAVLPTTLWIMSLRAITNGSDTMDRRTFANESLLEPMEVLSCPRFVFCSPYLLMILLRILKGSLAASKTYLNVHMQMQQKQVLDKNGMMQTDAIWEDLRTTLIASQESAAVHILLEVLDYIASKATDRVSHLELREIQGIIGTYVHQAFISEPSLAKLVHFQTYPKSVIPMMVASVPSMHICIDFVHEFLNVTEMEKQIFTIDLTSHLVLNYSIPKSLGVSKFCLNVIQTTLSMLTASTKCRFLRNVMPAMVRFVETFPILADDCVNILMTTGRILHSQSSLGMTTMEMPLTDSDKLCTYRDAQLHIIMIEDAFKALVTAVMKKSDLY.

A helical membrane pass occupies residues 822 to 842; that stretch reads FVFCSPYLLMILLRILKGSLA.

It belongs to the Integrator subunit 2 family. In terms of assembly, belongs to the multiprotein complex Integrator, at least composed of IntS1, IntS2, IntS3, IntS4, omd/IntS5, IntS6, defl/IntS7, IntS8, IntS9, IntS10, IntS11, IntS12, asun/IntS13, IntS14 and IntS15. The core complex associates with protein phosphatase 2A subunits mts/PP2A and Pp2A-29B, to form the Integrator-PP2A (INTAC) complex.

It is found in the nucleus membrane. Its subcellular location is the nucleus. Component of the integrator complex, a multiprotein complex that terminates RNA polymerase II (Pol II) transcription in the promoter-proximal region of genes. The integrator complex provides a quality checkpoint during transcription elongation by driving premature transcription termination of transcripts that are unfavorably configured for transcriptional elongation: the complex terminates transcription by (1) catalyzing dephosphorylation of the C-terminal domain (CTD) of Pol II subunit Polr2A/Rbp1 and Spt5, and (2) degrading the exiting nascent RNA transcript via endonuclease activity. The integrator complex is also involved in the 3'-end processing of the U7 snRNA, and also the spliceosomal snRNAs U1, U2, U4 and U5. The polypeptide is Integrator complex subunit 2 (Drosophila melanogaster (Fruit fly)).